Here is a 745-residue protein sequence, read N- to C-terminus: Single-minded homolog 1-A (745 aa).

The region spanning Met1–Arg53 is the bHLH domain. PAS domains are found at residues Gly77–His147 and Pro218–Gly288. One can recognise a Single-minded C-terminal domain in the interval Glu336–Ser745. Positions Thr350–Thr364 are enriched in polar residues. Disordered stretches follow at residues Thr350 to Ser413 and Glu529 to Lys563. The Nuclear localization signal signature appears at Arg368 to Ser387. Basic residues predominate over residues Val369–Thr381. Low complexity predominate over residues Ala532–Asp544.

In terms of assembly, efficient DNA binding requires dimerization with another bHLH protein. Heterodimer of sim1a and arnt. As to expression, expressed in embryonic forebrain at the eleven somite stage. Detected in brain throughout embryonic development.

The protein localises to the nucleus. In terms of biological role, transcriptional factor that may have pleiotropic effects during embryogenesis and in the adult. The sequence is that of Single-minded homolog 1-A (sim1a) from Danio rerio (Zebrafish).